Consider the following 346-residue polypeptide: Histidinol-phosphate aminotransferase (346 aa).

Position 209 is an N6-(pyridoxal phosphate)lysine (Lys-209).

It belongs to the class-II pyridoxal-phosphate-dependent aminotransferase family. Histidinol-phosphate aminotransferase subfamily. In terms of assembly, homodimer. Pyridoxal 5'-phosphate is required as a cofactor.

It carries out the reaction L-histidinol phosphate + 2-oxoglutarate = 3-(imidazol-4-yl)-2-oxopropyl phosphate + L-glutamate. Its pathway is amino-acid biosynthesis; L-histidine biosynthesis; L-histidine from 5-phospho-alpha-D-ribose 1-diphosphate: step 7/9. This chain is Histidinol-phosphate aminotransferase, found in Vibrio vulnificus (strain CMCP6).